The primary structure comprises 297 residues: Phospholipid scramblase 2 (297 aa).

A proline-rich domain (PRD) region spans residues 1–72; sequence MRSWNSLFCL…NQPGRPEGVP (72 aa). Over 1 to 276 the chain is Cytoplasmic; that stretch reads MRSWNSLFCL…IQFPRDLDVK (276 aa). Threonine 149 bears the Phosphothreonine; by PKC mark. 5 S-palmitoyl cysteine lipidation sites follow: cysteine 172, cysteine 173, cysteine 174, cysteine 176, and cysteine 177. A helical transmembrane segment spans residues 277 to 293; sequence MKAVMIGACFLIDYMFF. At 294-297 the chain is on the extracellular side; it reads ERTR.

Belongs to the phospholipid scramblase family. Ca(2+) is required as a cofactor. In terms of tissue distribution, expression of isoform 1 seems restricted to testis.

The protein localises to the membrane. The protein resides in the nucleus. The enzyme catalyses a 1,2-diacyl-sn-glycero-3-phosphocholine(in) = a 1,2-diacyl-sn-glycero-3-phosphocholine(out). Functionally, may catalyze calcium-induced ATP-independent rapid bidirectional and non-specific movement of phospholipids (lipid scrambling or lipid flip-flop) between the inner and outer leaflet of the plasma membrane. Its function is as follows. Has no phospholipid scramblase activity, due to the lack of a N-terminal proline-rich domain. In Homo sapiens (Human), this protein is Phospholipid scramblase 2.